The primary structure comprises 171 residues: Protein phosphatase 1 regulatory subunit 1A (171 aa).

An N-acetylmethionine modification is found at Met1. A disordered region spans residues 1–171; the sequence is MEQDNSPRKI…PLDSKGANSV (171 aa). The tract at residues 9–12 is essential for activity; sequence KIQF. Residues 19 to 29 are compositionally biased toward basic and acidic residues; sequence PHLDPEAAEQI. At Thr35 the chain carries Phosphothreonine; by PKA. The essential for activity stretch occupies residues 42–54; sequence TSDQSSPEIDEDR. Residues Ser43, Ser46, Ser47, and Ser67 each carry the phosphoserine modification. The segment covering 135–157 has biased composition (basic and acidic residues); that stretch reads KTAECIPKTHERGSKEPSTKEPS. The interaction with PPP1R15A stretch occupies residues 143–171; sequence THERGSKEPSTKEPSTHIPPLDSKGANSV.

This sequence belongs to the protein phosphatase inhibitor 1 family. In terms of assembly, interacts with PPP1R15A. Post-translationally, phosphorylation of Thr-35 is required for activity.

Inhibitor of protein-phosphatase 1. This protein may be important in hormonal control of glycogen metabolism. Hormones that elevate intracellular cAMP increase I-1 activity in many tissues. I-1 activation may impose cAMP control over proteins that are not directly phosphorylated by PKA. Following a rise in intracellular calcium, I-1 is inactivated by calcineurin (or PP2B). Does not inhibit type-2 phosphatases. The polypeptide is Protein phosphatase 1 regulatory subunit 1A (PPP1R1A) (Homo sapiens (Human)).